Consider the following 585-residue polypeptide: Glucose oxidase-like protein fsoC (585 aa).

A104 serves as a coordination point for FAD. The active-site Proton donor is the H521. H564 (proton acceptor) is an active-site residue.

This sequence belongs to the GMC oxidoreductase family. As to quaternary structure, monomer. The cofactor is FAD.

Functionally, glucose oxidase-like protein; part of the gene cluster that mediates the biosynthesis of the enfumafungin-type antibiotic fuscoatroside. Four enzymes are sufficient to produce fuscoatroside: the terpene cyclase-glycosyl transferase fusion protein fsoAthe cytochrome P450 monoxygenases fsoD and fsoE, and the acetyltransferase fsoF; the cytochrome P450 monooxygenase fsoB and the glucose oxidase-like protein fsoC do not seem to play a role in biosynthesis of fuscoatroside. In terms of biological role, glucose oxidase; part of the gene cluster that mediates the biosynthesis of the enfumafungin-type antibiotic, fuscoatroside. This is Glucose oxidase-like protein fsoC from Humicola fuscoatra.